Reading from the N-terminus, the 1383-residue chain is DNA-directed RNA polymerase subunit beta'' (1383 aa).

Zn(2+)-binding residues include Cys-220, Cys-289, Cys-296, and Cys-299.

It belongs to the RNA polymerase beta' chain family. RpoC2 subfamily. In plastids the minimal PEP RNA polymerase catalytic core is composed of four subunits: alpha, beta, beta', and beta''. When a (nuclear-encoded) sigma factor is associated with the core the holoenzyme is formed, which can initiate transcription. Zn(2+) serves as cofactor.

It is found in the plastid. It localises to the chloroplast. It catalyses the reaction RNA(n) + a ribonucleoside 5'-triphosphate = RNA(n+1) + diphosphate. Its function is as follows. DNA-dependent RNA polymerase catalyzes the transcription of DNA into RNA using the four ribonucleoside triphosphates as substrates. The polypeptide is DNA-directed RNA polymerase subunit beta'' (Oenothera argillicola (Appalachian evening primrose)).